The following is a 165-amino-acid chain: Large ribosomal subunit protein uL11 (165 aa).

It belongs to the universal ribosomal protein uL11 family. As to quaternary structure, part of the ribosomal stalk of the 50S ribosomal subunit. Interacts with L10 and the large rRNA to form the base of the stalk. L10 forms an elongated spine to which L12 dimers bind in a sequential fashion forming a multimeric L10(L12)X complex.

Forms part of the ribosomal stalk which helps the ribosome interact with GTP-bound translation factors. This chain is Large ribosomal subunit protein uL11, found in Thermococcus kodakarensis (strain ATCC BAA-918 / JCM 12380 / KOD1) (Pyrococcus kodakaraensis (strain KOD1)).